The chain runs to 637 residues: MNPSPLLDLIDSPQDLRRLDKKQLPRLAGELRTFLLESVGQTGGHFASNLGAVELTVALHYVYNTPEDKLVWDVGHQSYPHKILTGRKNQMHTMRQYGGLAGFPKRCESEYDAFGVGHSSTSIGAALGMAAADKQLGSDRRSVAIIGDGAMTAGQAFEALNCAGDMDVDLLVVLNDNEMSISPNVGALPKYLASNVVRDMHGLLSTVKAQTGKVLDKIPGAMEFAQKVEHKIKTLAEEAEHAKQSLSLFENFGFRYTGPVDGHNVENLVDVLEDLRGRKGPQLLHVITKKGNGYKLAENDPVKYHAVANLPKESAAQMPSEKEPKPAAKPTYTQVFGKWLCDRAAADSRLVAITPAMREGSGLVEFEQRFPDRYFDVGIAEQHAVTFAGGLACEGMKPVVAIYSTFLQRAYDQLVHDIALQNLPVLFAVDRAGIVGADGPTHAGLYDLSFLRCIPNMIVAAPSDENECRLLLSTCYQADAPAAVRYPRGTGTGVPVSDGMETVEIGKGIIRREGEKTAFIAFGSMVAPALAVAGKLNATVADMRFVKPIDEELIVRLARSHDRIVTLEENAEQGGAGSAVLEVLAKHGICKPVLLLGVADTVTGHGDPKKLLDDLGLSAEAVERRVRAWLSDRDAAN.

Thiamine diphosphate contacts are provided by residues His76 and 117–119; that span reads GHS. Asp148 is a Mg(2+) binding site. Thiamine diphosphate-binding positions include 149–150, Asn177, Tyr294, and Glu381; that span reads GA. Asn177 contacts Mg(2+).

This sequence belongs to the transketolase family. DXPS subfamily. Homodimer. Requires Mg(2+) as cofactor. The cofactor is thiamine diphosphate.

It catalyses the reaction D-glyceraldehyde 3-phosphate + pyruvate + H(+) = 1-deoxy-D-xylulose 5-phosphate + CO2. The protein operates within metabolic intermediate biosynthesis; 1-deoxy-D-xylulose 5-phosphate biosynthesis; 1-deoxy-D-xylulose 5-phosphate from D-glyceraldehyde 3-phosphate and pyruvate: step 1/1. Functionally, catalyzes the acyloin condensation reaction between C atoms 2 and 3 of pyruvate and glyceraldehyde 3-phosphate to yield 1-deoxy-D-xylulose-5-phosphate (DXP). This is 1-deoxy-D-xylulose-5-phosphate synthase from Neisseria meningitidis serogroup A / serotype 4A (strain DSM 15465 / Z2491).